The following is a 417-amino-acid chain: Probable sugar-binding periplasmic protein (417 aa).

An N-terminal signal peptide occupies residues 1–21; that stretch reads MLRKLLIGTALATSFAFSAHA.

This sequence belongs to the bacterial solute-binding protein 1 family.

It is found in the periplasm. In terms of biological role, part of a binding-protein-dependent transport system for a sugar. This is Probable sugar-binding periplasmic protein from Mesorhizobium japonicum (strain LMG 29417 / CECT 9101 / MAFF 303099) (Mesorhizobium loti (strain MAFF 303099)).